Reading from the N-terminus, the 99-residue chain is Monothiol glutaredoxin-S11 (99 aa).

The region spanning 1-99 is the Glutaredoxin domain; sequence MDKVMRMSSE…LVPLVKPYLC (99 aa). Cys-21 provides a ligand contact to [2Fe-2S] cluster.

Belongs to the glutaredoxin family. CC-type subfamily.

It localises to the cytoplasm. Functionally, may only reduce GSH-thiol disulfides, but not protein disulfides. This chain is Monothiol glutaredoxin-S11 (GRXS11), found in Arabidopsis thaliana (Mouse-ear cress).